The chain runs to 372 residues: UDP-N-acetylglucosamine--N-acetylmuramyl-(pentapeptide) pyrophosphoryl-undecaprenol N-acetylglucosamine transferase (372 aa).

UDP-N-acetyl-alpha-D-glucosamine is bound by residues 16–18, Asn128, Arg164, Ser192, Ile250, and Gln295; that span reads TGG.

It belongs to the glycosyltransferase 28 family. MurG subfamily.

Its subcellular location is the cell inner membrane. It catalyses the reaction di-trans,octa-cis-undecaprenyl diphospho-N-acetyl-alpha-D-muramoyl-L-alanyl-D-glutamyl-meso-2,6-diaminopimeloyl-D-alanyl-D-alanine + UDP-N-acetyl-alpha-D-glucosamine = di-trans,octa-cis-undecaprenyl diphospho-[N-acetyl-alpha-D-glucosaminyl-(1-&gt;4)]-N-acetyl-alpha-D-muramoyl-L-alanyl-D-glutamyl-meso-2,6-diaminopimeloyl-D-alanyl-D-alanine + UDP + H(+). Its pathway is cell wall biogenesis; peptidoglycan biosynthesis. In terms of biological role, cell wall formation. Catalyzes the transfer of a GlcNAc subunit on undecaprenyl-pyrophosphoryl-MurNAc-pentapeptide (lipid intermediate I) to form undecaprenyl-pyrophosphoryl-MurNAc-(pentapeptide)GlcNAc (lipid intermediate II). In Paraburkholderia xenovorans (strain LB400), this protein is UDP-N-acetylglucosamine--N-acetylmuramyl-(pentapeptide) pyrophosphoryl-undecaprenol N-acetylglucosamine transferase.